The sequence spans 1318 residues: Tetratricopeptide repeat protein 41 (1318 aa).

TPR repeat units lie at residues 401 to 434, 653 to 686, 819 to 852, 860 to 893, 993 to 1029, and 1047 to 1084; these read PRLE…KPCI, WIQE…PVRE, GRII…LLQS, LRAQ…LLRF, MEFL…KEKA, and SDTL…RAAH. Positions 1295–1318 are disordered; the sequence is KPGFPRRSQIESKLLKTSDDPNKE. A compositionally biased stretch (basic and acidic residues) spans 1302 to 1318; that stretch reads SQIESKLLKTSDDPNKE.

In terms of tissue distribution, highly expressed in lung and myeloid leukemia cell line (at protein level). Isoform 4: expressed in heart (at protein level).

Its subcellular location is the cytoplasm. The polypeptide is Tetratricopeptide repeat protein 41 (Mus musculus (Mouse)).